We begin with the raw amino-acid sequence, 728 residues long: Microtubule-associated protein VP5 (728 aa).

It belongs to the reoviridae microtubule-associated protein family.

The protein resides in the virion. The protein localises to the host cytoplasm. Its subcellular location is the host cytoskeleton. In terms of biological role, minor inner capsid component. Displays NTPase and RNA 5'-triphosphatase (RTPase) activities. May function as a cofactor of polymerase. Associates with microtubules and plays a role in the formation, structural organization and morphology of viral inclusions, where the assembly of cores and the replication of viral RNA occur. In Aquareovirus C (isolate Golden shiner/USA/GSRV/1977) (AQRV-C), this protein is Microtubule-associated protein VP5 (S5).